We begin with the raw amino-acid sequence, 204 residues long: Urease accessory protein UreG (204 aa).

Residue 12 to 19 coordinates GTP; that stretch reads GPVGSGKT.

The protein belongs to the SIMIBI class G3E GTPase family. UreG subfamily. As to quaternary structure, homodimer. UreD, UreF and UreG form a complex that acts as a GTP-hydrolysis-dependent molecular chaperone, activating the urease apoprotein by helping to assemble the nickel containing metallocenter of UreC. The UreE protein probably delivers the nickel.

The protein resides in the cytoplasm. Its function is as follows. Facilitates the functional incorporation of the urease nickel metallocenter. This process requires GTP hydrolysis, probably effectuated by UreG. The protein is Urease accessory protein UreG of Stutzerimonas stutzeri (strain A1501) (Pseudomonas stutzeri).